Reading from the N-terminus, the 73-residue chain is Large ribosomal subunit protein bL31 (73 aa).

Zn(2+) is bound by residues Cys-16, Cys-18, Cys-36, and Cys-39.

Belongs to the bacterial ribosomal protein bL31 family. Type A subfamily. In terms of assembly, part of the 50S ribosomal subunit. It depends on Zn(2+) as a cofactor.

Its function is as follows. Binds the 23S rRNA. This is Large ribosomal subunit protein bL31 from Citrifermentans bemidjiense (strain ATCC BAA-1014 / DSM 16622 / JCM 12645 / Bem) (Geobacter bemidjiensis).